The sequence spans 252 residues: Chitooligosaccharide deacetylase (252 aa).

Mg(2+) contacts are provided by His61 and His125.

The protein belongs to the YdjC deacetylase family. ChbG subfamily. Homodimer. It depends on Mg(2+) as a cofactor.

Its subcellular location is the cytoplasm. It catalyses the reaction N,N'-diacetylchitobiose + H2O = N-acetyl-beta-D-glucosaminyl-(1-&gt;4)-D-glucosamine + acetate. The enzyme catalyses diacetylchitobiose-6'-phosphate + H2O = N'-monoacetylchitobiose-6'-phosphate + acetate. The protein operates within glycan degradation; chitin degradation. Its function is as follows. Involved in the degradation of chitin. ChbG is essential for growth on the acetylated chitooligosaccharides chitobiose and chitotriose but is dispensable for growth on cellobiose and chitosan dimer, the deacetylated form of chitobiose. Deacetylation of chitobiose-6-P and chitotriose-6-P is necessary for both the activation of the chb promoter by the regulatory protein ChbR and the hydrolysis of phosphorylated beta-glucosides by the phospho-beta-glucosidase ChbF. Catalyzes the removal of only one acetyl group from chitobiose-6-P to yield monoacetylchitobiose-6-P, the inducer of ChbR and the substrate of ChbF. The polypeptide is Chitooligosaccharide deacetylase (Salmonella newport (strain SL254)).